Consider the following 225-residue polypeptide: Heptaprenylglyceryl phosphate synthase (225 aa).

Lysine 6 serves as a coordination point for sn-glycerol 1-phosphate. Mg(2+) contacts are provided by aspartate 8 and threonine 34. Sn-glycerol 1-phosphate is bound by residues 153–158, glycine 183, and 203–204; these read YVEYSG and GN.

Belongs to the GGGP/HepGP synthase family. Group I subfamily. As to quaternary structure, homodimer. The cofactor is Mg(2+).

It catalyses the reaction sn-glycerol 1-phosphate + all-trans-heptaprenyl diphosphate = 3-heptaprenyl-sn-glycero-1-phosphate + diphosphate. Its pathway is membrane lipid metabolism; glycerophospholipid metabolism. Its function is as follows. Prenyltransferase that catalyzes in vivo the transfer of the heptaprenyl moiety of heptaprenyl pyrophosphate (HepPP; 35 carbon atoms) to the C3 hydroxyl of sn-glycerol-1-phosphate (G1P), producing heptaprenylglyceryl phosphate (HepGP). This reaction is an ether-bond-formation step in the biosynthesis of archaea-type G1P-based membrane lipids found in Bacillales. The sequence is that of Heptaprenylglyceryl phosphate synthase from Listeria monocytogenes serotype 4b (strain CLIP80459).